The primary structure comprises 460 residues: Benzyl alcohol O-benzoyltransferase (460 aa).

Residues His-167 and Asp-382 each act as proton acceptor in the active site.

Belongs to the plant acyltransferase family.

The catalysed reaction is benzyl alcohol + benzoyl-CoA = benzyl benzoate + CoA. In terms of biological role, probably involved in the formation of volatile ester benzylbenzoate. This chain is Benzyl alcohol O-benzoyltransferase (HSR201), found in Nicotiana tabacum (Common tobacco).